A 526-amino-acid chain; its full sequence is Phenylacetaldehyde oxime monooxygenase CYP71AN24 (526 aa).

Residues 22–42 (SFNIFLVPILCLSIFILFSLT) form a helical membrane-spanning segment. Cys465 serves as a coordination point for heme.

This sequence belongs to the cytochrome P450 family. Heme is required as a cofactor. Expressed in seedlings and leaves.

The protein resides in the membrane. The enzyme catalyses (E)-phenylacetaldehyde oxime + reduced [NADPH--hemoprotein reductase] + O2 = (R)-mandelonitrile + oxidized [NADPH--hemoprotein reductase] + 2 H2O + H(+). It catalyses the reaction phenylacetonitrile + reduced [NADPH--hemoprotein reductase] + O2 = (R)-mandelonitrile + oxidized [NADPH--hemoprotein reductase] + H2O + H(+). Functionally, involved in L-phenylalanine-derived cyanogenic glycoside biosynthesis, including prunasin and amygdalin defensive agents. Catalyzes the conversion of phenylacetaldoxime (PAOx) and phenylacetonitrile (PAN) into mandelonitrile (MAN). To a lower extent, can convert various aromatic aldoximes and nitriles; mediates the transformation of 4-hydroxyphenylacetaldoxime, 4-hydroxyphenylacetonitrile, indole-3-acetal-doxime and indole-3-acetonitrile into the corresponding hydroxynitriles, but cannot use the aliphatic compounds 2-methylpropanaloxime and 2-methylpropanenitrile as substrates. This is Phenylacetaldehyde oxime monooxygenase CYP71AN24 from Prunus mume (Japanese apricot).